Here is a 969-residue protein sequence, read N- to C-terminus: Manganese resistance protein MNR2 (969 aa).

Positions 1-11 are enriched in basic and acidic residues; it reads MSTDNSQKDEG. Disordered stretches follow at residues 1 to 49, 96 to 153, 167 to 186, and 199 to 256; these read MSTD…SRRP, GAFI…DLSP, HKSFVDENSPTDRRQSNANN, and VNNN…NNSS. Residues 1–912 are Cytoplasmic-facing; the sequence is MSTDNSQKDE…DMNDVLGKIT (912 aa). Residues 13 to 23 show a composition bias toward low complexity; the sequence is PLLSPYSSSPQ. The span at 24–36 shows a compositional bias: basic residues; it reads LRKKKRNQKRRKD. Basic and acidic residues predominate over residues 37–48; sequence KFVGHLKSDSRR. S114 is modified (phosphoserine). Polar residues predominate over residues 141 to 152; it reads SDQNRSLVSDLS. S175 carries the phosphoserine modification. At T177 the chain carries Phosphothreonine. At S182 the chain carries Phosphoserine. Composition is skewed to low complexity over residues 225–234 and 244–256; these read NKNSKSTSSD and SRPSSSLSSNNSS. S383 bears the Phosphoserine mark. Disordered stretches follow at residues 559–662 and 746–769; these read VRRR…KPRE and QSDDSSDSDSSDSDSDSGASDEDA. Residues 565–578 are compositionally biased toward basic and acidic residues; it reads EKQESATLDHESIS. At T571 the chain carries Phosphothreonine. Residues S576 and S582 each carry the phosphoserine modification. Low complexity-rich tracts occupy residues 590–607 and 622–632; these read SNESNANNNNSTSNASRS and ANRTTNTSSSS. Positions 749 to 769 are enriched in acidic residues; sequence DSSDSDSSDSDSDSGASDEDA. The chain crosses the membrane as a helical span at residues 913–933; sequence ILGTIVLPMNVITGLWGMNVI. Over 934-941 the chain is Extracellular; it reads VPGQYRDS. Residues 942–962 traverse the membrane as a helical segment; sequence LTWFIGIVLFMCMLACSAYMY. Topologically, residues 963–969 are cytoplasmic; that stretch reads TKRRFGF.

Belongs to the CorA metal ion transporter (MIT) (TC 1.A.35) family.

It localises to the membrane. The chain is Manganese resistance protein MNR2 (MNR2) from Saccharomyces cerevisiae (strain ATCC 204508 / S288c) (Baker's yeast).